The chain runs to 291 residues: 33 kDa chaperonin (291 aa).

Disulfide bonds link Cys-229–Cys-231 and Cys-262–Cys-265.

Belongs to the HSP33 family. Post-translationally, under oxidizing conditions two disulfide bonds are formed involving the reactive cysteines. Under reducing conditions zinc is bound to the reactive cysteines and the protein is inactive.

The protein resides in the cytoplasm. In terms of biological role, redox regulated molecular chaperone. Protects both thermally unfolding and oxidatively damaged proteins from irreversible aggregation. Plays an important role in the bacterial defense system toward oxidative stress. This Vibrio cholerae serotype O1 (strain ATCC 39315 / El Tor Inaba N16961) protein is 33 kDa chaperonin.